A 1092-amino-acid polypeptide reads, in one-letter code: Probable arabinosyltransferase A (1092 aa).

A run of 13 helical transmembrane segments spans residues 21–43, 214–233, 249–271, 324–346, 353–372, 382–399, 404–426, 517–534, 541–563, 568–590, 602–624, 639–661, and 682–704; these read IARL…VPLL, AVMV…LALL, GLWT…IVGA, VWMR…RCVL, VAAN…AAWL, PLIA…ENSI, LWPA…QGLI, FAVL…MVLL, GAVS…LLIL, WAIQ…AFAF, ALYV…GWFY, IAHY…LAGW, and ALAS…GSMV. The disordered stretch occupies residues 772–798; sequence PSGVSEHLEPEPVGTNPGTPNSEGPVD.

It belongs to the emb family.

The protein resides in the cell membrane. In terms of biological role, arabinosyl transferase responsible for the polymerization of arabinose into the arabinan of arabinogalactan. In Mycolicibacterium smegmatis (Mycobacterium smegmatis), this protein is Probable arabinosyltransferase A (embA).